The chain runs to 600 residues: NADH-quinone oxidoreductase subunit C/D (600 aa).

The NADH dehydrogenase I subunit C stretch occupies residues 1–190; it reads MIDLMPKKNT…EPFFLNEQKE (190 aa). Positions 214 to 600 are NADH dehydrogenase I subunit D; it reads EFMFLNLGPN…IDFVMSDVDR (387 aa).

In the N-terminal section; belongs to the complex I 30 kDa subunit family. This sequence in the C-terminal section; belongs to the complex I 49 kDa subunit family. NDH-1 is composed of 13 different subunits. Subunits NuoB, CD, E, F, and G constitute the peripheral sector of the complex.

It localises to the cell inner membrane. It carries out the reaction a quinone + NADH + 5 H(+)(in) = a quinol + NAD(+) + 4 H(+)(out). NDH-1 shuttles electrons from NADH, via FMN and iron-sulfur (Fe-S) centers, to quinones in the respiratory chain. The immediate electron acceptor for the enzyme in this species is believed to be ubiquinone. Couples the redox reaction to proton translocation (for every two electrons transferred, four hydrogen ions are translocated across the cytoplasmic membrane), and thus conserves the redox energy in a proton gradient. This Buchnera aphidicola subsp. Acyrthosiphon pisum (strain APS) (Acyrthosiphon pisum symbiotic bacterium) protein is NADH-quinone oxidoreductase subunit C/D.